The primary structure comprises 769 residues: Phosphoribosylformylglycinamidine synthase subunit PurL (769 aa).

The segment covering 1–13 (MTGTPSAPTTSPD) has biased composition (polar residues). A disordered region spans residues 1–30 (MTGTPSAPTTSPDDQADGPGEGTVDRQPYR). Histidine 65 is an active-site residue. ATP contacts are provided by tyrosine 68 and lysine 109. Position 111 (glutamate 111) interacts with Mg(2+). Substrate-binding positions include 112–115 (SHNH) and arginine 134. Histidine 113 (proton acceptor) is an active-site residue. Aspartate 135 contributes to the Mg(2+) binding site. Residue glutamine 260 participates in substrate binding. Residue aspartate 288 participates in Mg(2+) binding. 337-339 (ESQ) contacts substrate. Residues asparagine 524 and glycine 561 each contribute to the ATP site. Position 562 (asparagine 562) interacts with Mg(2+). Residue serine 564 participates in substrate binding.

This sequence belongs to the FGAMS family. In terms of assembly, monomer. Part of the FGAM synthase complex composed of 1 PurL, 1 PurQ and 2 PurS subunits.

The protein localises to the cytoplasm. It carries out the reaction N(2)-formyl-N(1)-(5-phospho-beta-D-ribosyl)glycinamide + L-glutamine + ATP + H2O = 2-formamido-N(1)-(5-O-phospho-beta-D-ribosyl)acetamidine + L-glutamate + ADP + phosphate + H(+). It functions in the pathway purine metabolism; IMP biosynthesis via de novo pathway; 5-amino-1-(5-phospho-D-ribosyl)imidazole from N(2)-formyl-N(1)-(5-phospho-D-ribosyl)glycinamide: step 1/2. Functionally, part of the phosphoribosylformylglycinamidine synthase complex involved in the purines biosynthetic pathway. Catalyzes the ATP-dependent conversion of formylglycinamide ribonucleotide (FGAR) and glutamine to yield formylglycinamidine ribonucleotide (FGAM) and glutamate. The FGAM synthase complex is composed of three subunits. PurQ produces an ammonia molecule by converting glutamine to glutamate. PurL transfers the ammonia molecule to FGAR to form FGAM in an ATP-dependent manner. PurS interacts with PurQ and PurL and is thought to assist in the transfer of the ammonia molecule from PurQ to PurL. The chain is Phosphoribosylformylglycinamidine synthase subunit PurL from Parafrankia sp. (strain EAN1pec).